The primary structure comprises 316 residues: Glucan endo-1,3-beta-glucosidase GV (316 aa).

Glu-99 serves as the catalytic Proton donor. The active-site Nucleophile is the Glu-239.

This sequence belongs to the glycosyl hydrolase 17 family.

It localises to the cytoplasm. It carries out the reaction Hydrolysis of (1-&gt;3)-beta-D-glucosidic linkages in (1-&gt;3)-beta-D-glucans.. Its function is as follows. May provide a degree of protection against microbial invasion of germinated barley grain through its ability to degrade fungal cell wall polysaccharides. The polypeptide is Glucan endo-1,3-beta-glucosidase GV (Hordeum vulgare (Barley)).